The primary structure comprises 299 residues: Type II restriction enzyme BglI (299 aa).

Positions 116, 142, and 143 each coordinate Mg(2+).

Homodimer. Requires Mg(2+) as cofactor.

The enzyme catalyses Endonucleolytic cleavage of DNA to give specific double-stranded fragments with terminal 5'-phosphates.. In terms of biological role, a P subtype restriction enzyme that recognizes the double-stranded sequence 5'-GCCNNNNNGGC-3' and cleaves before N-8. This chain is Type II restriction enzyme BglI (bglIR), found in Bacillus subtilis.